Consider the following 360-residue polypeptide: MILSPQSQLLERNIALFDEGQWAFINPSDAYFLDGLKSQEVTVIHQYFDIFAECVRVIPSASFDSRDITSKGFEVSQKVGNHTHIFTPFVALEKSHTDVMISLPKAKTHFQMLLRMAASMVGQNGRIHVVGENKGGIKSAAKLMQQYGATQKVDSARHCSLITVIVEAPHLAFEAEAWIDTNTYAVEGTSWKVASMPGVFSYKELDAGTELLLEKLSTSLSGDVLDFACGAGVIASYIMLKYPHLKLHLTDVSALAIYCSALTLAENQLAATLYAADGLHGMTNKVQHIVTNPPFHTGIKTDYTVTKRFISDAKARLTRGGTMQMVANRFLPYPGLLSEHFQTVYTTAQTSQFSVYQATL.

It belongs to the methyltransferase superfamily. RsmC family. As to quaternary structure, monomer.

Its subcellular location is the cytoplasm. It carries out the reaction guanosine(1207) in 16S rRNA + S-adenosyl-L-methionine = N(2)-methylguanosine(1207) in 16S rRNA + S-adenosyl-L-homocysteine + H(+). Its function is as follows. Specifically methylates the guanine in position 1207 of 16S rRNA in the 30S particle. This chain is Ribosomal RNA small subunit methyltransferase C, found in Alteromonas mediterranea (strain DSM 17117 / CIP 110805 / LMG 28347 / Deep ecotype).